Here is an 84-residue protein sequence, read N- to C-terminus: Small ribosomal subunit protein bS18 (84 aa).

This sequence belongs to the bacterial ribosomal protein bS18 family. As to quaternary structure, part of the 30S ribosomal subunit. Forms a tight heterodimer with protein bS6.

Its function is as follows. Binds as a heterodimer with protein bS6 to the central domain of the 16S rRNA, where it helps stabilize the platform of the 30S subunit. This Dictyoglomus turgidum (strain DSM 6724 / Z-1310) protein is Small ribosomal subunit protein bS18.